Reading from the N-terminus, the 470-residue chain is Nucleoporin NUP49 (470 aa).

Residues 1-13 are compositionally biased toward polar residues; that stretch reads MSLFGTNTTSQTP. The tract at residues 1–92 is disordered; the sequence is MSLFGTNTTS…STTTTTSQPQ (92 aa). GLFG repeat units follow at residues 17-20, 45-48, 63-66, 79-82, 96-99, 111-114, 127-130, 142-145, 156-159, 168-171, 181-184, and 193-197; these read GLFG and GLFGQ. Residues 20–31 show a composition bias toward low complexity; that stretch reads GTTTSQSAQTGS. Positions 32–74 are enriched in polar residues; that stretch reads LFGTATSQPQQTGGLFGSTATQTPSSQLQSTGLFGSTTATSQP. Positions 75–92 are enriched in low complexity; it reads QQTGGLFGSTTTTTSQPQ. Residues 196-221 are disordered; the sequence is GQSTTQPQQQQNATPGLTMGQSTNTQ. Positions 197 to 206 are enriched in low complexity; that stretch reads QSTTQPQQQQ. The segment covering 207–221 has biased composition (polar residues); sequence NATPGLTMGQSTNTQ. 2 coiled-coil regions span residues 239–270 and 375–401; these read TRFN…EAVD and FSKT…AHLT.

It belongs to the nucleoporin GLFG family. As to quaternary structure, component of the nuclear pore complex (NPC). NPC constitutes the exclusive means of nucleocytoplasmic transport. NPCs allow the passive diffusion of ions and small molecules and the active, nuclear transport receptor-mediated bidirectional transport of macromolecules such as proteins, RNAs, ribonucleoparticles (RNPs), and ribosomal subunits across the nuclear envelope. Due to its 8-fold rotational symmetry, all subunits are present with 8 copies or multiples thereof.

It localises to the nucleus. It is found in the nuclear pore complex. The protein localises to the nucleus membrane. Functions as a component of the nuclear pore complex (NPC). NPC components, collectively referred to as nucleoporins (NUPs), can play the role of both NPC structural components and of docking or interaction partners for transiently associated nuclear transport factors. Active directional transport is assured by both, a Phe-Gly (FG) repeat affinity gradient for these transport factors across the NPC and a transport cofactor concentration gradient across the nuclear envelope (GSP1 and GSP2 GTPases associated predominantly with GTP in the nucleus, with GDP in the cytoplasm). NUP49 plays an important role in several nuclear transport pathways including poly(A)+ RNA, tRNA, and pre-ribosome transport. The chain is Nucleoporin NUP49 (NUP49) from Chaetomium thermophilum (strain DSM 1495 / CBS 144.50 / IMI 039719) (Thermochaetoides thermophila).